The primary structure comprises 280 residues: Phosphatidylglycerol--prolipoprotein diacylglyceryl transferase (280 aa).

4 helical membrane-spanning segments follow: residues tryptophan 30–isoleucine 50, phenylalanine 71–tyrosine 91, isoleucine 106–isoleucine 126, and alanine 132–phenylalanine 152. Arginine 154 lines the a 1,2-diacyl-sn-glycero-3-phospho-(1'-sn-glycerol) pocket. Helical transmembrane passes span glutamine 188–tyrosine 208, glycine 217–phenylalanine 237, and tryptophan 251–alanine 271.

Belongs to the Lgt family.

The protein localises to the cell inner membrane. The enzyme catalyses L-cysteinyl-[prolipoprotein] + a 1,2-diacyl-sn-glycero-3-phospho-(1'-sn-glycerol) = an S-1,2-diacyl-sn-glyceryl-L-cysteinyl-[prolipoprotein] + sn-glycerol 1-phosphate + H(+). Its pathway is protein modification; lipoprotein biosynthesis (diacylglyceryl transfer). Its function is as follows. Catalyzes the transfer of the diacylglyceryl group from phosphatidylglycerol to the sulfhydryl group of the N-terminal cysteine of a prolipoprotein, the first step in the formation of mature lipoproteins. This chain is Phosphatidylglycerol--prolipoprotein diacylglyceryl transferase, found in Rhizobium meliloti (strain 1021) (Ensifer meliloti).